Consider the following 451-residue polypeptide: Tubby-like F-box protein 12 (451 aa).

An F-box domain is found at 57-112; it reads SRWVGLPPELLRDVMKRLEEGESNWPSRKDVVACAAVCRTWREICKDIVQSPEICG. Residues 387 to 406 are compositionally biased toward low complexity; that stretch reads LEQQQQQQQQNHASSSSSAS. Residues 387-407 are disordered; that stretch reads LEQQQQQQQQNHASSSSSASD.

It belongs to the TUB family. As to expression, ubiquitous.

This chain is Tubby-like F-box protein 12 (TULP12), found in Oryza sativa subsp. japonica (Rice).